The following is a 167-amino-acid chain: Ubiquitin-fold modifier-conjugating enzyme 1 (167 aa).

The active-site Glycyl thioester intermediate is the cysteine 116. Lysine 122 is covalently cross-linked (Glycyl lysine isopeptide (Lys-Gly) (interchain with G-Cter in UFM1)).

This sequence belongs to the ubiquitin-conjugating enzyme family. UFC1 subfamily. Interacts with UBA5 (via C-terminus). Interacts with UFL1. Interacts with UFM1. Interacts with KIRREL3. Ufmylated at Lys-122. Deufmylated by UFSP1.

E2-like enzyme which specifically catalyzes the second step in ufmylation. Accepts the ubiquitin-like modifier UFM1 from the E1 enzyme UBA5 and forms an intermediate with UFM1 via a thioester linkage. Ufmylation is involved in various processes, such as ribosome recycling, response to DNA damage, interferon response or reticulophagy (also called ER-phagy). This is Ubiquitin-fold modifier-conjugating enzyme 1 from Homo sapiens (Human).